The primary structure comprises 251 residues: MRKPVIAGNWKLYKTTSEALELVNELIPLVKNASGVEIVVAPVFTVLSTVKNALKGTNINLAAQDCFWDEQGAYTGEVSSTMLLDAGCSHVIIGHSERRQFFGETDETVNKKNIAALRAGLTILFCIGETLHEREENQTFTVLERQISGGISGITKDELKNVIIAYEPVWAIGTGKTATDDQAQEAHKFIRGVVAKLCDSESAENIRILYGGSVKPENVKGLMAQKDIDGALVGGASLKADSFAHIVRFSE.

9 to 11 is a substrate binding site; that stretch reads NWK. H95 (electrophile) is an active-site residue. Catalysis depends on E167, which acts as the Proton acceptor. Residues G173, S213, and 234–235 contribute to the substrate site; that span reads GG.

It belongs to the triosephosphate isomerase family. As to quaternary structure, homodimer.

The protein localises to the cytoplasm. The enzyme catalyses D-glyceraldehyde 3-phosphate = dihydroxyacetone phosphate. It functions in the pathway carbohydrate biosynthesis; gluconeogenesis. It participates in carbohydrate degradation; glycolysis; D-glyceraldehyde 3-phosphate from glycerone phosphate: step 1/1. In terms of biological role, involved in the gluconeogenesis. Catalyzes stereospecifically the conversion of dihydroxyacetone phosphate (DHAP) to D-glyceraldehyde-3-phosphate (G3P). The chain is Triosephosphate isomerase from Geotalea uraniireducens (strain Rf4) (Geobacter uraniireducens).